The following is a 360-amino-acid chain: Carbamoyl phosphate synthase small chain (360 aa).

The interval 1–169 (MTKRLLILED…TKTAYPAPGI (169 aa)) is CPSase. S46, G220, and G222 together coordinate L-glutamine. Positions 172–358 (NIVLVDFGLK…LEMIDSWRCT (187 aa)) constitute a Glutamine amidotransferase type-1 domain. Residue C247 is the Nucleophile of the active site. Residues M248, Q251, N289, G291, and Y292 each coordinate L-glutamine. Active-site residues include H331 and D333.

It belongs to the CarA family. In terms of assembly, composed of two chains; the small (or glutamine) chain promotes the hydrolysis of glutamine to ammonia, which is used by the large (or ammonia) chain to synthesize carbamoyl phosphate. Tetramer of heterodimers (alpha,beta)4.

The enzyme catalyses hydrogencarbonate + L-glutamine + 2 ATP + H2O = carbamoyl phosphate + L-glutamate + 2 ADP + phosphate + 2 H(+). It catalyses the reaction L-glutamine + H2O = L-glutamate + NH4(+). It functions in the pathway amino-acid biosynthesis; L-arginine biosynthesis; carbamoyl phosphate from bicarbonate: step 1/1. The protein operates within pyrimidine metabolism; UMP biosynthesis via de novo pathway; (S)-dihydroorotate from bicarbonate: step 1/3. In terms of biological role, small subunit of the glutamine-dependent carbamoyl phosphate synthetase (CPSase). CPSase catalyzes the formation of carbamoyl phosphate from the ammonia moiety of glutamine, carbonate, and phosphate donated by ATP, constituting the first step of 2 biosynthetic pathways, one leading to arginine and/or urea and the other to pyrimidine nucleotides. The small subunit (glutamine amidotransferase) binds and cleaves glutamine to supply the large subunit with the substrate ammonia. In Streptococcus pyogenes serotype M3 (strain SSI-1), this protein is Carbamoyl phosphate synthase small chain.